The sequence spans 161 residues: Xanthine-guanine phosphoribosyltransferase (161 aa).

5-phospho-alpha-D-ribose 1-diphosphate-binding positions include 41–42 (RG) and 95–103 (DDLVDTGNT). Asp-96 is a Mg(2+) binding site. 2 residues coordinate guanine: Asp-99 and Ile-142. The xanthine site is built by Asp-99 and Ile-142. GMP is bound by residues 99–103 (DTGNT) and 141–142 (WI).

Belongs to the purine/pyrimidine phosphoribosyltransferase family. XGPT subfamily. As to quaternary structure, homotetramer. The cofactor is Mg(2+).

It is found in the cell inner membrane. It carries out the reaction GMP + diphosphate = guanine + 5-phospho-alpha-D-ribose 1-diphosphate. The catalysed reaction is XMP + diphosphate = xanthine + 5-phospho-alpha-D-ribose 1-diphosphate. The enzyme catalyses IMP + diphosphate = hypoxanthine + 5-phospho-alpha-D-ribose 1-diphosphate. Its pathway is purine metabolism; GMP biosynthesis via salvage pathway; GMP from guanine: step 1/1. The protein operates within purine metabolism; XMP biosynthesis via salvage pathway; XMP from xanthine: step 1/1. In terms of biological role, purine salvage pathway enzyme that catalyzes the transfer of the ribosyl-5-phosphate group from 5-phospho-alpha-D-ribose 1-diphosphate (PRPP) to the N9 position of the 6-oxopurines guanine and xanthine to form the corresponding ribonucleotides GMP (guanosine 5'-monophosphate) and XMP (xanthosine 5'-monophosphate), with the release of PPi. To a lesser extent, also acts on hypoxanthine. In Idiomarina loihiensis (strain ATCC BAA-735 / DSM 15497 / L2-TR), this protein is Xanthine-guanine phosphoribosyltransferase.